Consider the following 1071-residue polypeptide: DNA-directed RNA polymerase subunit beta (1071 aa).

It belongs to the RNA polymerase beta chain family. As to quaternary structure, in plastids the minimal PEP RNA polymerase catalytic core is composed of four subunits: alpha, beta, beta', and beta''. When a (nuclear-encoded) sigma factor is associated with the core the holoenzyme is formed, which can initiate transcription.

It localises to the plastid. It is found in the chloroplast. It catalyses the reaction RNA(n) + a ribonucleoside 5'-triphosphate = RNA(n+1) + diphosphate. Functionally, DNA-dependent RNA polymerase catalyzes the transcription of DNA into RNA using the four ribonucleoside triphosphates as substrates. In Acorus calamus (Sweet flag), this protein is DNA-directed RNA polymerase subunit beta.